The primary structure comprises 578 residues: Protein SIA1 (578 aa).

Positions Met-1–Ser-28 are cleaved as a signal peptide.

Its function is as follows. May be involved in the activation of the plasma membrane proton-ATPase by glucose. The chain is Protein SIA1 (SIA1) from Kluyveromyces lactis (strain ATCC 8585 / CBS 2359 / DSM 70799 / NBRC 1267 / NRRL Y-1140 / WM37) (Yeast).